The primary structure comprises 950 residues: Serine/threonine-protein kinase atg1 (950 aa).

The region spanning 6–311 (YTRLDEIGRG…FPDFFENGVI (306 aa)) is the Protein kinase domain. ATP is bound by residues 12–20 (IGRGSFATV) and lysine 35. Aspartate 149 functions as the Proton acceptor in the catalytic mechanism. Disordered stretches follow at residues 314–425 (PIPG…HATA), 443–467 (RQRGRNTFSEGSPQTDRQADKLREE), 505–570 (QGGI…QSPT), 671–690 (VQTDPSSKGNLAGERENPDS), and 926–950 (PTPSANVPSKMAPLNPVSVGATPPK). Composition is skewed to polar residues over residues 370–389 (GLTQRPPSQNQRFGTPPTTT), 447–458 (RNTFSEGSPQTD), and 511–520 (GAQTGALSRR). Residues 549–565 (SRADSMHNRQSSYERRY) show a composition bias toward basic and acidic residues.

The protein belongs to the protein kinase superfamily. Ser/Thr protein kinase family. APG1/unc-51/ULK1 subfamily. In terms of assembly, homodimer. Forms a ternary complex with ATG13 and ATG17.

It localises to the cytoplasm. Its subcellular location is the preautophagosomal structure membrane. The enzyme catalyses L-seryl-[protein] + ATP = O-phospho-L-seryl-[protein] + ADP + H(+). The catalysed reaction is L-threonyl-[protein] + ATP = O-phospho-L-threonyl-[protein] + ADP + H(+). Its function is as follows. Serine/threonine protein kinase involved in the cytoplasm to vacuole transport (Cvt) and found to be essential in autophagy, where it is required for the formation of autophagosomes. Involved in the clearance of protein aggregates which cannot be efficiently cleared by the proteasome. Required for selective autophagic degradation of the nucleus (nucleophagy) as well as for mitophagy which contributes to regulate mitochondrial quantity and quality by eliminating the mitochondria to a basal level to fulfill cellular energy requirements and preventing excess ROS production. Also involved in endoplasmic reticulum-specific autophagic process, in selective removal of ER-associated degradation (ERAD) substrates. Plays a key role in ATG9 and ATG23 cycling through the pre-autophagosomal structure and is necessary to promote ATG18 binding to ATG9 through phosphorylation of ATG9. Catalyzes phosphorylation of ATG4, decreasing the interaction between ATG4 and ATG8 and impairing deconjugation of PE-conjugated forms of ATG8. The protein is Serine/threonine-protein kinase atg1 of Neosartorya fischeri (strain ATCC 1020 / DSM 3700 / CBS 544.65 / FGSC A1164 / JCM 1740 / NRRL 181 / WB 181) (Aspergillus fischerianus).